A 101-amino-acid polypeptide reads, in one-letter code: Small ribosomal subunit protein uS14 (101 aa).

The protein belongs to the universal ribosomal protein uS14 family. As to quaternary structure, part of the 30S ribosomal subunit. Contacts proteins S3 and S10.

In terms of biological role, binds 16S rRNA, required for the assembly of 30S particles and may also be responsible for determining the conformation of the 16S rRNA at the A site. In Xylella fastidiosa (strain M23), this protein is Small ribosomal subunit protein uS14.